The primary structure comprises 350 residues: Alcohol dehydrogenase 1 (350 aa).

Zn(2+)-binding residues include cysteine 44, threonine 46, histidine 67, cysteine 98, cysteine 101, cysteine 104, cysteine 112, and cysteine 154. An alcohol is bound by residues threonine 46 and histidine 67. Position 46 (threonine 46) interacts with NAD(+). NAD(+)-binding positions include 178–182 (GAGGG), aspartate 202, lysine 207, 271–273 (IGL), and arginine 343.

It belongs to the zinc-containing alcohol dehydrogenase family. Homotetramer. It depends on Zn(2+) as a cofactor.

It is found in the cytoplasm. It localises to the secreted. The enzyme catalyses a primary alcohol + NAD(+) = an aldehyde + NADH + H(+). The catalysed reaction is a secondary alcohol + NAD(+) = a ketone + NADH + H(+). The sequence is that of Alcohol dehydrogenase 1 (alcA) from Emericella nidulans (strain FGSC A4 / ATCC 38163 / CBS 112.46 / NRRL 194 / M139) (Aspergillus nidulans).